The chain runs to 256 residues: Flap endonuclease Xni (256 aa).

Residue aspartate 105 coordinates Mg(2+). The 94-residue stretch at 163–256 (RSQLIDYLAL…QFRIKKPDSE (94 aa)) folds into the 5'-3' exonuclease domain. Residues leucine 172, alanine 173, proline 181, valine 183, and isoleucine 186 each coordinate K(+). Residues 185-190 (GIGPKS) are interaction with DNA.

The protein belongs to the Xni family. Requires Mg(2+) as cofactor. It depends on K(+) as a cofactor.

Has flap endonuclease activity. During DNA replication, flap endonucleases cleave the 5'-overhanging flap structure that is generated by displacement synthesis when DNA polymerase encounters the 5'-end of a downstream Okazaki fragment. The sequence is that of Flap endonuclease Xni from Shewanella pealeana (strain ATCC 700345 / ANG-SQ1).